We begin with the raw amino-acid sequence, 233 residues long: Large ribosomal subunit protein uL1 (233 aa).

Belongs to the universal ribosomal protein uL1 family. In terms of assembly, part of the 50S ribosomal subunit.

Its function is as follows. Binds directly to 23S rRNA. The L1 stalk is quite mobile in the ribosome, and is involved in E site tRNA release. In terms of biological role, protein L1 is also a translational repressor protein, it controls the translation of the L11 operon by binding to its mRNA. The sequence is that of Large ribosomal subunit protein uL1 from Brucella melitensis biotype 1 (strain ATCC 23456 / CCUG 17765 / NCTC 10094 / 16M).